Reading from the N-terminus, the 734-residue chain is Ribosomal RNA large subunit methyltransferase K/L (734 aa).

Positions 49 to 167 (HAYRICMWSR…KTEHTYCLDL (119 aa)) constitute a THUMP domain.

It belongs to the methyltransferase superfamily. RlmKL family.

The protein localises to the cytoplasm. It catalyses the reaction guanosine(2445) in 23S rRNA + S-adenosyl-L-methionine = N(2)-methylguanosine(2445) in 23S rRNA + S-adenosyl-L-homocysteine + H(+). It carries out the reaction guanosine(2069) in 23S rRNA + S-adenosyl-L-methionine = N(2)-methylguanosine(2069) in 23S rRNA + S-adenosyl-L-homocysteine + H(+). Its function is as follows. Specifically methylates the guanine in position 2445 (m2G2445) and the guanine in position 2069 (m7G2069) of 23S rRNA. This chain is Ribosomal RNA large subunit methyltransferase K/L, found in Acinetobacter baumannii (strain AYE).